The primary structure comprises 367 residues: Tetraprenyl-beta-curcumene synthase (367 aa).

This sequence belongs to the large terpene synthase family.

It catalyses the reaction all-trans-heptaprenyl diphosphate = (R)-tetraprenyl-beta-curcumene + diphosphate. Catalyzes the transformation of a linear C35 prenyl diphosphate chain to form tetraprenyl-beta-curcumene. This chain is Tetraprenyl-beta-curcumene synthase (ytpB), found in Bacillus subtilis (strain 168).